Here is a 28-residue protein sequence, read N- to C-terminus: Omega-agatoxin-Aa2a (28 aa).

The protein belongs to the neurotoxin 04 (omega-agtx) family. 03 (type II/III omega-agtx) subfamily. In terms of tissue distribution, expressed by the venom gland.

It localises to the secreted. Functionally, omega-agatoxin are antagonist of voltage-gated calcium channels. They block insect neuromuscular transmission presynaptically. Potent blocker of N-type calcium channels (Cav2.2/CACNA1B). This Agelenopsis aperta (North American funnel-web spider) protein is Omega-agatoxin-Aa2a.